The primary structure comprises 281 residues: Probable endonuclease 4 (281 aa).

Positions 69, 109, 145, 179, 182, 216, 229, 231, and 261 each coordinate Zn(2+).

It belongs to the AP endonuclease 2 family. The cofactor is Zn(2+).

It carries out the reaction Endonucleolytic cleavage to 5'-phosphooligonucleotide end-products.. Endonuclease IV plays a role in DNA repair. It cleaves phosphodiester bonds at apurinic or apyrimidinic (AP) sites, generating a 3'-hydroxyl group and a 5'-terminal sugar phosphate. This Proteus mirabilis (strain HI4320) protein is Probable endonuclease 4.